The sequence spans 226 residues: Ribose-5-phosphate isomerase A (226 aa).

Residues 33–36, 86–89, and 99–102 contribute to the substrate site; these read TGST, DGAD, and KGGG. Residue Glu108 is the Proton acceptor of the active site. A substrate-binding site is contributed by Lys126.

Belongs to the ribose 5-phosphate isomerase family. In terms of assembly, homodimer.

It catalyses the reaction aldehydo-D-ribose 5-phosphate = D-ribulose 5-phosphate. It functions in the pathway carbohydrate degradation; pentose phosphate pathway; D-ribose 5-phosphate from D-ribulose 5-phosphate (non-oxidative stage): step 1/1. In terms of biological role, catalyzes the reversible conversion of ribose-5-phosphate to ribulose 5-phosphate. This is Ribose-5-phosphate isomerase A from Bordetella pertussis (strain Tohama I / ATCC BAA-589 / NCTC 13251).